We begin with the raw amino-acid sequence, 489 residues long: Aerolysin (489 aa).

An N-terminal signal peptide occupies residues 1 to 24 (MMNRIITANLANLASSLMLAQVLG). Intrachain disulfides connect Cys-44–Cys-100 and Cys-184–Cys-189. The interval 70–86 (WQITGLADRWVIMGPGY) is interaction with host N-linked glycan. Residues 257 to 289 (YSLSEKVTTKNKFQWPLVGETELAIEIAASQSW) form a part of the transmembrane beta-barrel after proteolytic activation of the toxin and insertion into the host membrane region. Residues 347-356 (RWGGNAWYTH) form an interaction with glycans from host GPI-anchor region. The propeptide occupies 445 to 489 (TRSAKAAQLRSASAEEVALTSVDLDSEALANEGFGNVSLTIVPVQ).

The protein belongs to the aerolysin family. As to quaternary structure, homodimer in solution; homoheptamer in the host membrane. After binding to GPI-anchored proteins in target membranes and proteolytic removal of the C-terminal propeptide, the protein assembles into a heptameric pre-pore complex. A further conformation change leads to insertion into the host membrane. Post-translationally, proteolytic cleavage and subsequent release of the propeptide trigger a major conformation change, leading to the formation of a heptameric pre-pore that then inserts into the host membrane.

Its subcellular location is the secreted. It localises to the host cell membrane. Its function is as follows. Secreted, cytolytic toxin that forms pores in host membranes after proteolytic removal of a C-terminal propeptide, leading to destruction of the membrane permeability barrier and cell death. The pores are formed by transmembrane beta-strands and are approximately 3 nm in diameter. This chain is Aerolysin (ash3), found in Aeromonas salmonicida.